The primary structure comprises 293 residues: MDLSEDQIRGLPHHELLGHFLQMREEFNEFQTSSAEIEKMMDSELDDLKTQLKKAETRVQQMTTEQIRNKDRQDDSRVQFAQVEEQLRRENSHLHEQCESQRERIRKLEQRNDVLETSERNKEYLASDLGSKLDHAIEKIAMLESELYERQVAAEEMHRLREEQLRTTERPRLIVEPLRNDPEILPDEPSPGPSKEEFKMSSEDVFMEDVQHHEDVRMEETIAKIDEVRIDDNKNIQEKSQRVSTGTGAGACINRIVKDLMTKVERLDSILSTIRVSNNSSNNNSSHLTTTRA.

Residues 36-147 (EIEKMMDSEL…EKIAMLESEL (112 aa)) are a coiled coil. The interval 239–293 (KSQRVSTGTGAGACINRIVKDLMTKVERLDSILSTIRVSNNSSNNNSSHLTTTRA) is required for interaction with unc-83 isoform c.

It belongs to the nudE family. Component of a dynein-regulating complex composed of at least lis-1 and nud-2. Interacts with lis-1; the interaction is direct. Interacts (via C-terminus) with unc-83; the interaction is direct, and is required for recruitment of nud-2 to the nuclear envelope. In terms of tissue distribution, expressed in ventral cord neurons, the pharynx, seam cells of the hypodermis and in vulval muscle cells.

The protein localises to the nucleus envelope. Part of a complex with lis-1, which is recruited to the nuclear envelope by unc-83, where, in turn, it recruits dynein to the nuclear surface and regulates nuclear migration in hypodermal precursor cells. Plays a role in GABAergic synaptic vesicle localization in the ventral nerve cord. This Caenorhabditis elegans protein is Protein nud-2.